The sequence spans 470 residues: Chromosomal replication initiator protein DnaA (470 aa).

The segment at 1–79 (MTDDTWGLLR…AVQRLAFKVA (79 aa)) is domain I, interacts with DnaA modulators. The domain II stretch occupies residues 79–128 (AANSPTRPVQPTMSEAIEEPAPLQTTVVDQLGNQEGNTSVKSPPEDLQAA). Residues 129 to 350 (PLDPRFTFDS…GALTRLFAFA (222 aa)) are domain III, AAA+ region. 4 residues coordinate ATP: Gly-173, Gly-175, Lys-176, and Thr-177. The segment at 351 to 470 (SLVGREIDMD…VEMLRRSLEA (120 aa)) is domain IV, binds dsDNA.

It belongs to the DnaA family. Oligomerizes as a right-handed, spiral filament on DNA at oriC.

It is found in the cytoplasm. In terms of biological role, plays an essential role in the initiation and regulation of chromosomal replication. ATP-DnaA binds to the origin of replication (oriC) to initiate formation of the DNA replication initiation complex once per cell cycle. Binds the DnaA box (a 9 base pair repeat at the origin) and separates the double-stranded (ds)DNA. Forms a right-handed helical filament on oriC DNA; dsDNA binds to the exterior of the filament while single-stranded (ss)DNA is stabiized in the filament's interior. The ATP-DnaA-oriC complex binds and stabilizes one strand of the AT-rich DNA unwinding element (DUE), permitting loading of DNA polymerase. After initiation quickly degrades to an ADP-DnaA complex that is not apt for DNA replication. Binds acidic phospholipids. The sequence is that of Chromosomal replication initiator protein DnaA from Ruegeria sp. (strain TM1040) (Silicibacter sp.).